Consider the following 123-residue polypeptide: Histone H2B (123 aa).

The disordered stretch occupies residues M1–R30. An N-methylproline; partial modification is found at P2. K44 bears the N6-succinyllysine mark. O-linked (GlcNAc) serine glycosylation is present at S110. N6-succinyllysine is present on residues K114 and K118. Residue K118 forms a Glycyl lysine isopeptide (Lys-Gly) (interchain with G-Cter in ubiquitin) linkage.

This sequence belongs to the histone H2B family. In terms of assembly, the nucleosome is a histone octamer containing two molecules each of H2A, H2B, H3 and H4 assembled in one H3-H4 heterotetramer and two H2A-H2B heterodimers. The octamer wraps approximately 147 bp of DNA. Post-translationally, phosphorylated by the catalytic component of the Dbf4-dependent kinase (DDK) complex Cdc7. Monoubiquitination of Lys-118 by Bre1 gives a specific tag for epigenetic transcriptional activation and is also prerequisite for histone H3 'Lys-4' and 'Lys-79' methylation. Deubiquitination of Lys-118 by the SAGA complex is involved in activating transcription of a large subset of genes. In terms of processing, methylation at Pro-2 increases upon heat shock. Post-translationally, glcNAcylation at Ser-110 promotes monoubiquitination of Lys-118. It fluctuates in response to extracellular glucose, and associates with transcribed genes.

The protein resides in the nucleus. The protein localises to the chromosome. Functionally, core component of nucleosome. Nucleosomes wrap and compact DNA into chromatin, limiting DNA accessibility to the cellular machineries which require DNA as a template. Histones thereby play a central role in transcription regulation, DNA repair, DNA replication and chromosomal stability. DNA accessibility is regulated via a complex set of post-translational modifications of histones, also called histone code, and nucleosome remodeling. This is Histone H2B (His2B) from Drosophila yakuba (Fruit fly).